Consider the following 103-residue polypeptide: Large ribosomal subunit protein bL21 (103 aa).

The protein belongs to the bacterial ribosomal protein bL21 family. As to quaternary structure, part of the 50S ribosomal subunit. Contacts protein L20.

In terms of biological role, this protein binds to 23S rRNA in the presence of protein L20. The protein is Large ribosomal subunit protein bL21 of Ruminiclostridium cellulolyticum (strain ATCC 35319 / DSM 5812 / JCM 6584 / H10) (Clostridium cellulolyticum).